The chain runs to 508 residues: MGLPWYRVHTVVLNDPGRLIAVHIMHTALVAGWAGSMALYELAVFDPSDPVLDPMWRQGMFILPFMTRLGIKESWGGWSITGESAVNPGLWSYEGVAGAHIVFSGLCFLSAIWHWVYWDLEIFSDPRTGKPSLDLPKIFGIHLFLSGVACFGFGAFHVTGLYGPGIWVSDPFGLTGRIQPVSPAWGAEGFDPFVPGGIASHHIAAGLLGIIAGLFHLSVRPPQRLYRGLRMGNIETVLSSSIAAVFFAAFIVAGTMWYGSATTPIELFGPTRYQWDQGYFQQEIDRRVRAGLTEKLSLSEAWSRIPEKLAFYDYIGNNPAKGGLFRAGAMDNGDGIAVGWLGHPIFRDKEGNELFVRRMPTFFETFPVVLVNKEGIVKADVPFRRSESKYSVEQVGVTVEFYGGELNGVSFSDPAIVKKYARRAQLGEIFELDRATLKSDGVFRSSPRGWFTFGHATFALLFFFGHIWHGARTLFRDIFAGIDPELDAQVEFGAFQKLGDPTTKRQVV.

Helical transmembrane passes span 21–36 (AVHIMHTALVAGWAGS), 101–115 (IVFSGLCFLSAIWHW), 140–156 (GIHLFLSGVACFGFGAF), 203–218 (IAAGLLGIIAGLFHLS), 237–252 (VLSSSIAAVFFAAFIV), and 457–472 (TFALLFFFGHIWHGAR).

The protein belongs to the PsbB/PsbC family. PsbB subfamily. PSII is composed of 1 copy each of membrane proteins PsbA, PsbB, PsbC, PsbD, PsbE, PsbF, PsbH, PsbI, PsbJ, PsbK, PsbL, PsbM, PsbT, PsbX, PsbY, PsbZ, Psb30/Ycf12, at least 3 peripheral proteins of the oxygen-evolving complex and a large number of cofactors. It forms dimeric complexes. Binds multiple chlorophylls. PSII binds additional chlorophylls, carotenoids and specific lipids. serves as cofactor.

It is found in the plastid. The protein localises to the chloroplast thylakoid membrane. Functionally, one of the components of the core complex of photosystem II (PSII). It binds chlorophyll and helps catalyze the primary light-induced photochemical processes of PSII. PSII is a light-driven water:plastoquinone oxidoreductase, using light energy to abstract electrons from H(2)O, generating O(2) and a proton gradient subsequently used for ATP formation. The protein is Photosystem II CP47 reaction center protein of Gnetum parvifolium (Small-leaved jointfir).